Here is a 171-residue protein sequence, read N- to C-terminus: Crossover junction endodeoxyribonuclease RuvC (171 aa).

Residues Asp7, Glu66, and Asp138 contribute to the active site. The Mg(2+) site is built by Asp7, Glu66, and Asp138.

The protein belongs to the RuvC family. In terms of assembly, homodimer which binds Holliday junction (HJ) DNA. The HJ becomes 2-fold symmetrical on binding to RuvC with unstacked arms; it has a different conformation from HJ DNA in complex with RuvA. In the full resolvosome a probable DNA-RuvA(4)-RuvB(12)-RuvC(2) complex forms which resolves the HJ. Requires Mg(2+) as cofactor.

The protein resides in the cytoplasm. The enzyme catalyses Endonucleolytic cleavage at a junction such as a reciprocal single-stranded crossover between two homologous DNA duplexes (Holliday junction).. Its function is as follows. The RuvA-RuvB-RuvC complex processes Holliday junction (HJ) DNA during genetic recombination and DNA repair. Endonuclease that resolves HJ intermediates. Cleaves cruciform DNA by making single-stranded nicks across the HJ at symmetrical positions within the homologous arms, yielding a 5'-phosphate and a 3'-hydroxyl group; requires a central core of homology in the junction. The consensus cleavage sequence is 5'-(A/T)TT(C/G)-3'. Cleavage occurs on the 3'-side of the TT dinucleotide at the point of strand exchange. HJ branch migration catalyzed by RuvA-RuvB allows RuvC to scan DNA until it finds its consensus sequence, where it cleaves and resolves the cruciform DNA. This is Crossover junction endodeoxyribonuclease RuvC from Francisella philomiragia subsp. philomiragia (strain ATCC 25017 / CCUG 19701 / FSC 153 / O#319-036).